A 345-amino-acid polypeptide reads, in one-letter code: Phosphoribosylformylglycinamidine cyclo-ligase (345 aa).

It belongs to the AIR synthase family.

The protein resides in the cytoplasm. The enzyme catalyses 2-formamido-N(1)-(5-O-phospho-beta-D-ribosyl)acetamidine + ATP = 5-amino-1-(5-phospho-beta-D-ribosyl)imidazole + ADP + phosphate + H(+). It functions in the pathway purine metabolism; IMP biosynthesis via de novo pathway; 5-amino-1-(5-phospho-D-ribosyl)imidazole from N(2)-formyl-N(1)-(5-phospho-D-ribosyl)glycinamide: step 2/2. The chain is Phosphoribosylformylglycinamidine cyclo-ligase from Salmonella typhi.